Reading from the N-terminus, the 252-residue chain is Probable transcriptional regulatory protein Fnod_1106 (252 aa).

It belongs to the TACO1 family.

The protein localises to the cytoplasm. The protein is Probable transcriptional regulatory protein Fnod_1106 of Fervidobacterium nodosum (strain ATCC 35602 / DSM 5306 / Rt17-B1).